The primary structure comprises 200 residues: Lipopolysaccharide core heptose(II)-phosphate phosphatase (200 aa).

Residues 1–25 form the signal peptide; that stretch reads MLAFCRSSLKSKKYIIILLALAAIA.

It belongs to the phosphoglycerate mutase family. Ais subfamily.

It is found in the periplasm. It functions in the pathway bacterial outer membrane biogenesis; lipopolysaccharide metabolism. Catalyzes the dephosphorylation of heptose(II) of the outer membrane lipopolysaccharide core. The protein is Lipopolysaccharide core heptose(II)-phosphate phosphatase of Escherichia coli (strain ATCC 8739 / DSM 1576 / NBRC 3972 / NCIMB 8545 / WDCM 00012 / Crooks).